Consider the following 123-residue polypeptide: Highly acidic elicitin 20 (123 aa).

An N-terminal signal peptide occupies residues 1 to 20; that stretch reads MQFTALFAATAVALVGSVSA. Intrachain disulfides connect Cys23/Cys91, Cys47/Cys76, and Cys71/Cys115.

This sequence belongs to the elicitin family.

It is found in the secreted. Functionally, induces local and distal defense responses (incompatible hypersensitive reaction) in plants from the solanaceae and cruciferae families. Elicits leaf necrosis and causes the accumulation of pathogenesis-related proteins. Might interact with the lipidic molecules of the plasma membrane. The protein is Highly acidic elicitin 20 (B20) of Phytophthora cryptogea.